The following is a 399-amino-acid chain: Argininosuccinate synthase (399 aa).

Residue 8-16 (AYSGGLDTS) participates in ATP binding. An L-citrulline-binding site is contributed by tyrosine 87. Glycine 117 lines the ATP pocket. L-aspartate contacts are provided by threonine 119, asparagine 123, and aspartate 124. Asparagine 123 provides a ligand contact to L-citrulline. Residues arginine 127, serine 175, glutamate 260, and tyrosine 272 each contribute to the L-citrulline site.

Belongs to the argininosuccinate synthase family. Type 1 subfamily. As to quaternary structure, homotetramer.

The protein resides in the cytoplasm. The enzyme catalyses L-citrulline + L-aspartate + ATP = 2-(N(omega)-L-arginino)succinate + AMP + diphosphate + H(+). It participates in amino-acid biosynthesis; L-arginine biosynthesis; L-arginine from L-ornithine and carbamoyl phosphate: step 2/3. This chain is Argininosuccinate synthase, found in Mycolicibacterium smegmatis (strain ATCC 700084 / mc(2)155) (Mycobacterium smegmatis).